The sequence spans 329 residues: Flotillin-like protein FloA (329 aa).

The next 2 membrane-spanning stretches (helical) occupy residues 4–24 and 26–46; these read IAFI…FAIV and VGLW…TLIG.

It belongs to the flotillin-like FloA family. Homooligomerizes.

The protein resides in the cell membrane. Its subcellular location is the membrane raft. Found in functional membrane microdomains (FMM) that may be equivalent to eukaryotic membrane rafts. FMMs are highly dynamic and increase in number as cells age. Flotillins are thought to be important factors in membrane fluidity. The polypeptide is Flotillin-like protein FloA (Acetivibrio thermocellus (strain ATCC 27405 / DSM 1237 / JCM 9322 / NBRC 103400 / NCIMB 10682 / NRRL B-4536 / VPI 7372) (Clostridium thermocellum)).